Here is a 476-residue protein sequence, read N- to C-terminus: Glutamate--tRNA ligase (476 aa).

The 'HIGH' region motif lies at 9–19 (PSPTGTLHLGT). The 'KMSKS' region motif lies at 248–252 (KLSKR). Position 251 (K251) interacts with ATP.

Belongs to the class-I aminoacyl-tRNA synthetase family. Glutamate--tRNA ligase type 1 subfamily. In terms of assembly, monomer.

The protein localises to the cytoplasm. It catalyses the reaction tRNA(Glu) + L-glutamate + ATP = L-glutamyl-tRNA(Glu) + AMP + diphosphate. Catalyzes the attachment of glutamate to tRNA(Glu) in a two-step reaction: glutamate is first activated by ATP to form Glu-AMP and then transferred to the acceptor end of tRNA(Glu). The chain is Glutamate--tRNA ligase from Prochlorococcus marinus (strain NATL1A).